A 209-amino-acid polypeptide reads, in one-letter code: Ribonuclease HII (209 aa).

Positions Ser18–Arg209 constitute an RNase H type-2 domain. 3 residues coordinate a divalent metal cation: Asp24, Glu25, and Asp116.

The protein belongs to the RNase HII family. The cofactor is Mn(2+). Mg(2+) is required as a cofactor.

The protein localises to the cytoplasm. The enzyme catalyses Endonucleolytic cleavage to 5'-phosphomonoester.. In terms of biological role, endonuclease that specifically degrades the RNA of RNA-DNA hybrids. This chain is Ribonuclease HII, found in Shewanella oneidensis (strain ATCC 700550 / JCM 31522 / CIP 106686 / LMG 19005 / NCIMB 14063 / MR-1).